The primary structure comprises 76 residues: MAERPLDVIHKSLDKEVLVILKRGAEYRGKLIGYDIHLNVVLADAQLIENGEPKKSYGKIVIRGDNVLAISPVEIE.

The Sm domain occupies arginine 4 to glutamate 76.

The protein belongs to the snRNP Sm proteins family.

This chain is Putative snRNP Sm-like protein, found in Thermococcus sibiricus (strain DSM 12597 / MM 739).